Here is a 309-residue protein sequence, read N- to C-terminus: Carbamate kinase 2 (309 aa).

The protein belongs to the carbamate kinase family.

The protein localises to the cytoplasm. It carries out the reaction hydrogencarbonate + NH4(+) + ATP = carbamoyl phosphate + ADP + H2O + H(+). The protein operates within metabolic intermediate metabolism; carbamoyl phosphate degradation; CO(2) and NH(3) from carbamoyl phosphate: step 1/1. The protein is Carbamate kinase 2 (arcC2) of Staphylococcus epidermidis (strain ATCC 12228 / FDA PCI 1200).